The primary structure comprises 207 residues: Recombination protein RecR (207 aa).

A C4-type zinc finger spans residues 60 to 75 (CRHCHNISDSDVCTIC). The Toprim domain occupies 83 to 178 (STLCVVENIR…RVSVIARGIA (96 aa)).

This sequence belongs to the RecR family.

Functionally, may play a role in DNA repair. It seems to be involved in an RecBC-independent recombinational process of DNA repair. It may act with RecF and RecO. This is Recombination protein RecR from Porphyromonas gingivalis (strain ATCC BAA-308 / W83).